The following is a 144-amino-acid chain: Transmembrane protein 170A (144 aa).

The Lumenal segment spans residues 1 to 50; the sequence is MEREGSGGSGGSAGLLQQILSLKVVPRVGNGTLCPNSTSLCSFPEMWYGV. N-linked (GlcNAc...) asparagine glycosylation is found at Asn30 and Asn36. A helical membrane pass occupies residues 51 to 71; sequence FLWALVSSLFFHVPAGLLALF. Topologically, residues 72–85 are cytoplasmic; sequence TLRHHKYGRFMSVS. The chain crosses the membrane as a helical span at residues 86-106; sequence ILLMGIVGPITAGILTSAAIA. The Lumenal portion of the chain corresponds to 107–116; sequence GVYRAAGKEM. Residues 117–137 form a helical membrane-spanning segment; it reads IPFEALTLGTGQTFCVLVVSF. The Cytoplasmic segment spans residues 138-144; sequence LRILATL.

Belongs to the TMEM170 family. As to quaternary structure, interacts with RTN4.

The protein localises to the endoplasmic reticulum membrane. It localises to the nucleus envelope. Acts as a regulator of endoplasmic reticulum (ER) and nuclear envelope (NE) morphogenesis. Affects the ratio between tubular ER and ER sheets by promoting sheet formation at the expense of tubules. Influences NE expansion, nuclear pore complex formation and proper localization of inner nuclear membrane proteins. The chain is Transmembrane protein 170A (TMEM170A) from Homo sapiens (Human).